Reading from the N-terminus, the 319-residue chain is Ribonucleoside-diphosphate reductase small chain (319 aa).

The Fe cation site is built by D70, E101, and H104. Y108 is a catalytic residue. Positions 163, 197, and 200 each coordinate Fe cation. Residues 313 to 319 (FSLDVDF) form an interaction with R1 region.

Belongs to the ribonucleoside diphosphate reductase small chain family. As to quaternary structure, interacts with RNR1/OPG080 subunit. Can interact with host RNR1 supunit. Fe cation is required as a cofactor.

It carries out the reaction a 2'-deoxyribonucleoside 5'-diphosphate + [thioredoxin]-disulfide + H2O = a ribonucleoside 5'-diphosphate + [thioredoxin]-dithiol. In terms of biological role, ribonucleoside-diphosphate reductase holoenzyme provides the precursors necessary for viral DNA synthesis. Allows virus growth in non-dividing cells. Catalyzes the biosynthesis of deoxyribonucleotides from the corresponding ribonucleotides. This is Ribonucleoside-diphosphate reductase small chain (OPG048) from Vaccinia virus (strain Ankara) (VACV).